The following is a 283-amino-acid chain: Protoheme IX farnesyltransferase (283 aa).

The next 7 membrane-spanning stretches (helical) occupy residues I13–L33, G35–L55, I90–V110, L156–L176, M208–A228, W230–F250, and V262–F282.

This sequence belongs to the UbiA prenyltransferase family. Protoheme IX farnesyltransferase subfamily.

It is found in the cell inner membrane. The catalysed reaction is heme b + (2E,6E)-farnesyl diphosphate + H2O = Fe(II)-heme o + diphosphate. The protein operates within porphyrin-containing compound metabolism; heme O biosynthesis; heme O from protoheme: step 1/1. In terms of biological role, converts heme B (protoheme IX) to heme O by substitution of the vinyl group on carbon 2 of heme B porphyrin ring with a hydroxyethyl farnesyl side group. The chain is Protoheme IX farnesyltransferase from Salinibacter ruber (strain DSM 13855 / M31).